The sequence spans 237 residues: Ribosomal RNA small subunit methyltransferase G (237 aa).

Residues glycine 78, phenylalanine 83, alanine 129–glutamate 130, and arginine 148 each bind S-adenosyl-L-methionine. Residues lysine 218–leucine 237 form a disordered region.

The protein belongs to the methyltransferase superfamily. RNA methyltransferase RsmG family.

It is found in the cytoplasm. In terms of biological role, specifically methylates the N7 position of a guanine in 16S rRNA. The polypeptide is Ribosomal RNA small subunit methyltransferase G (Streptococcus pneumoniae (strain JJA)).